The following is an 88-amino-acid chain: Apolipoprotein C-I (88 aa).

The first 26 residues, 1–26 (MRLFLSLPVLVVVLAMVLEGPAPAQA), serve as a signal peptide directing secretion.

Belongs to the apolipoprotein C1 family.

The protein localises to the secreted. Functionally, inhibitor of lipoprotein binding to the low density lipoprotein (LDL) receptor, LDL receptor-related protein, and very low density lipoprotein (VLDL) receptor. Associates with high density lipoproteins (HDL) and the triacylglycerol-rich lipoproteins in the plasma and makes up about 10% of the protein of the VLDL and 2% of that of HDL. Appears to interfere directly with fatty acid uptake and is also the major plasma inhibitor of cholesteryl ester transfer protein (CETP). Binds free fatty acids and reduces their intracellular esterification. Modulates the interaction of APOE with beta-migrating VLDL and inhibits binding of beta-VLDL to the LDL receptor-related protein. The chain is Apolipoprotein C-I (APOC1) from Arctocephalus gazella (Antarctic fur seal).